Here is a 159-residue protein sequence, read N- to C-terminus: NADH-quinone oxidoreductase subunit B (159 aa).

[4Fe-4S] cluster contacts are provided by Cys-32, Cys-33, Cys-97, and Cys-126.

The protein belongs to the complex I 20 kDa subunit family. NDH-1 is composed of 14 different subunits. Subunits NuoB, C, D, E, F, and G constitute the peripheral sector of the complex. It depends on [4Fe-4S] cluster as a cofactor.

The protein resides in the cell inner membrane. The enzyme catalyses a quinone + NADH + 5 H(+)(in) = a quinol + NAD(+) + 4 H(+)(out). NDH-1 shuttles electrons from NADH, via FMN and iron-sulfur (Fe-S) centers, to quinones in the respiratory chain. The immediate electron acceptor for the enzyme in this species is believed to be ubiquinone. Couples the redox reaction to proton translocation (for every two electrons transferred, four hydrogen ions are translocated across the cytoplasmic membrane), and thus conserves the redox energy in a proton gradient. In Helicobacter pylori (strain J99 / ATCC 700824) (Campylobacter pylori J99), this protein is NADH-quinone oxidoreductase subunit B.